A 353-amino-acid polypeptide reads, in one-letter code: MTIALGKFTKEENDLFDIMDDWLRRDRFVFVGWSGLLLFPCAYFALGGWFTGTTFVTSWYTHGLASSYLEGCNFLTAAVSTPANSLAHSLLLLWGPEAQGDLTRWCQLGGLWTFVALHGAFGLIGFMLRQFELARSVQLRPYNAIAFSGPIAVFVSVFLIYPLGQSGWFFAPSFGVAAIFRFILFFQGFHNWTLNPFHMMGVAGVLGAALLCAIHGATVENTLFEDGDGANTFRAFNPTQAEETYSMVTANRFWSQIFGVAFSNKRWLHFFMLFVPVTGLWMSALGVVGLALNLRAYDFVSQEIRAAEDPEFETFYTKNILLNEGIRAWMAAQDQPHENLIFPEEVLPRGNAL.

Thr2 is subject to N-acetylthreonine. Residue Thr2 is modified to Phosphothreonine. A helical membrane pass occupies residues 41 to 61 (CAYFALGGWFTGTTFVTSWYT). His118 provides a ligand contact to chlorophyll a. The chain crosses the membrane as a helical span at residues 125 to 141 (GFMLRQFELARSVQLRP). Positions 130 and 143 each coordinate pheophytin a. The chain crosses the membrane as a helical span at residues 153–166 (VFVSVFLIYPLGQS). His198 contacts chlorophyll a. The helical transmembrane segment at 208–228 (AALLCAIHGATVENTLFEDGD) threads the bilayer. A plastoquinone-binding residues include His215 and Phe262. His215 contributes to the Fe cation binding site. His269 provides a ligand contact to Fe cation. A helical membrane pass occupies residues 279–295 (GLWMSALGVVGLALNLR).

This sequence belongs to the reaction center PufL/M/PsbA/D family. PSII is composed of 1 copy each of membrane proteins PsbA, PsbB, PsbC, PsbD, PsbE, PsbF, PsbH, PsbI, PsbJ, PsbK, PsbL, PsbM, PsbT, PsbX, PsbY, PsbZ, Psb30/Ycf12, at least 3 peripheral proteins of the oxygen-evolving complex and a large number of cofactors. It forms dimeric complexes. Requires The D1/D2 heterodimer binds P680, chlorophylls that are the primary electron donor of PSII, and subsequent electron acceptors. It shares a non-heme iron and each subunit binds pheophytin, quinone, additional chlorophylls, carotenoids and lipids. There is also a Cl(-1) ion associated with D1 and D2, which is required for oxygen evolution. The PSII complex binds additional chlorophylls, carotenoids and specific lipids. as cofactor.

It localises to the plastid. The protein resides in the chloroplast thylakoid membrane. It catalyses the reaction 2 a plastoquinone + 4 hnu + 2 H2O = 2 a plastoquinol + O2. Functionally, photosystem II (PSII) is a light-driven water:plastoquinone oxidoreductase that uses light energy to abstract electrons from H(2)O, generating O(2) and a proton gradient subsequently used for ATP formation. It consists of a core antenna complex that captures photons, and an electron transfer chain that converts photonic excitation into a charge separation. The D1/D2 (PsbA/PsbD) reaction center heterodimer binds P680, the primary electron donor of PSII as well as several subsequent electron acceptors. D2 is needed for assembly of a stable PSII complex. The chain is Photosystem II D2 protein from Pelargonium hortorum (Common geranium).